Consider the following 262-residue polypeptide: UPF0619 GPI-anchored membrane protein C1322.10 (262 aa).

The signal sequence occupies residues methionine 1–alanine 20. Disordered stretches follow at residues serine 136 to threonine 165 and isoleucine 175 to isoleucine 194. 2 N-linked (GlcNAc...) asparagine glycosylation sites follow: asparagine 207 and asparagine 227. Asparagine 242 is lipidated: GPI-like-anchor amidated asparagine. The propeptide at glycine 243–alanine 262 is removed in mature form.

It belongs to the UPF0619 family.

The protein resides in the golgi apparatus membrane. It is found in the cell membrane. In Schizosaccharomyces pombe (strain 972 / ATCC 24843) (Fission yeast), this protein is UPF0619 GPI-anchored membrane protein C1322.10.